We begin with the raw amino-acid sequence, 172 residues long: Bcl-2-related protein A1 (172 aa).

The short motif at 77-97 (KEFEDGIINWGRIVTIFAFGG) is the BH1 element. Positions 132–147 (EWIRQNGGWEDGFIKK) match the BH2 motif.

Belongs to the Bcl-2 family. In terms of assembly, interacts directly with BCL2L11/BIM and PMAIP1. Interacts directly with BAK1, BID, BMF and BBC3. Interacts with BOP. Interacts with isoform 3, isoform 4 and isoform 5 of ING4. Interacts with UBQLN4. As to expression, expressed in hemopoietic tissues, including bone marrow, spleen and thymus.

It is found in the cytoplasm. Functionally, retards apoptosis induced by IL-3 deprivation. May function in the response of hemopoietic cells to external signals and in maintaining endothelial survival during infection. Can inhibit apoptosis induced by serum starvation in the mammary epithelial cell line HC11. The chain is Bcl-2-related protein A1 (Bcl2a1) from Mus musculus (Mouse).